The primary structure comprises 76 residues: Endothelin-1 (76 aa).

An endothelin-like region spans residues 30–44 (CQCASQKDKKCWNFC).

This sequence belongs to the endothelin/sarafotoxin family.

The protein resides in the secreted. Endothelins are endothelium-derived vasoconstrictor peptides. Probable ligand for G-protein coupled receptors EDNRA and EDNRB which activates PTK2B, BCAR1, BCAR3 and, GTPases RAP1 and RHOA cascade in glomerular mesangial cells. Also binds the DEAR/FBXW7-AS1 receptor. Promotes mesenteric arterial wall remodeling via activation of ROCK signaling and subsequent colocalization of NFATC3 with F-actin filaments. NFATC3 then translocates to the nucleus where it subsequently promotes the transcription of the smooth muscle hypertrophy and differentiation marker ACTA2. The sequence is that of Endothelin-1 (EDN1) from Macaca fascicularis (Crab-eating macaque).